We begin with the raw amino-acid sequence, 1342 residues long: MVYSYTEKKRIRKDFGKRPQVLDIPYLLSIQLDSFTKFIEQDPEGQYGLEAAFRSVFPIQSYNGNSKLEYVSYNLREPEFDVKECQIRGVTYSAPLRVKLRLVVYDKDAPANTVKDIKEQEVYMGEIPLMTDNGTFVINGTERVIVSQLHRSPGVFFDSDKGKTHSSGKVLYNARVIPYRGSWLDFEFDPKDNLFVRIDRRRKLPATIILRALNKTTEEILDLFFDKVVFEVKDQTLMMELIPERLRGETATFDIEANGKVYVEAGRRITARHIRQLTKDDITHIEVPVDYIVGKVASHDYVNEDTGEIIIAANQEFSLEDLANLSQAGYKKIEVLFTNDLDHGAYISDTLRADSTVDRLSALVEIYRMMRPGEPPTKEAAEALFESLFFSEERYDLSTVGRMKFNSSIGRDNDEGAGVLDETDIIEVMRKLIDIRNGIGEVDDIDHLGNRRIRSVGEMAENQFRVGLVRVERAVRERLSLGDLDAIMPQDLINAKPISAAVKEFFGSSQLSQFMDQNNPLSEVTHKRRISALGPGGLTRERAGFEVRDVHATHYGRLCPIETPEGPNIGLINSLSAFAQCNEYGFLETPYRRVVDGQVTDQVDYLSAIEEGTFVIAQANAVLTEEGTFADELIIARQKGESGLHPREHIQYMDVATNQVVSVAASLIPFLEHDDANRALMGANMQRQAVPTLKADKPLVGTGIERNVAVDSGVTAVAKRGGVVQSVDASRIVIKVNEDELVPGEAGIDIYNLTKYTRSNQNTCINQRPTVLPGEPVTRGDVLADGPSTDLGELALGQNMRIAFMPWNGYNFEDSILVSERVVQEDRFTTIHIQELSCVARDTKLGSEEITADIPNVGEAALSKLDESGIVYIGAEVKGGDILVGKVTPKGETQLTPEEKLLRAIFGEKASDVKDSSLRVPNSVSGTIIDVQVFTRDGVEKDKRALEIEQMQLKEAKKDITEEFQILEGGLLARVRTLLVAAGVSEVKLDAMDRKQWLEITLDDEAQQNQLEQLAEQYDELKAEFDKKFETKRRKITQGDDLAPGVLKIVKVYLAVKRRIQPGDKMAGRHGNKGVISKINPVEDMPYDEKGQPVDIVLNPLGVPSRMNIGQILEVHMGLAAKGVGDKINQMLKEQQELHKFRNFLQKVYDLGETRQEVDIAALSDDEVRTLIKNLRGGLPIATPIFDGAPEASIKELLKLVDLPESGQLKLFDGRTGDAFERPVTVGYMYMLKLNHLVDDKMHARSTGSYSLVTQQPLGGKAQFGGQRFGEMEVWALEAYGAAYTLQEMLTVKSDDVNGRTKMYKNIVDGDHRMEPGMPESFNVLLKEIRSLGINIELEDEE.

The protein belongs to the RNA polymerase beta chain family. The RNAP catalytic core consists of 2 alpha, 1 beta, 1 beta' and 1 omega subunit. When a sigma factor is associated with the core the holoenzyme is formed, which can initiate transcription.

It carries out the reaction RNA(n) + a ribonucleoside 5'-triphosphate = RNA(n+1) + diphosphate. Its function is as follows. DNA-dependent RNA polymerase catalyzes the transcription of DNA into RNA using the four ribonucleoside triphosphates as substrates. The protein is DNA-directed RNA polymerase subunit beta of Aliivibrio fischeri (strain ATCC 700601 / ES114) (Vibrio fischeri).